A 525-amino-acid polypeptide reads, in one-letter code: Cytochrome P450 4V2 (525 aa).

A helical transmembrane segment spans residues 13–33 (LLLWGAASALSLAGASLVLSL). The heme site is built by E329 and C467.

Belongs to the cytochrome P450 family. The cofactor is heme. As to expression, broadly expressed. Detected in heart, brain, placenta, lung, liver, skeletal muscle, kidney, pancreas, retina, retinal pigment epithelium (RPE) and lymphocytes.

It localises to the endoplasmic reticulum membrane. The enzyme catalyses dodecanoate + reduced [NADPH--hemoprotein reductase] + O2 = 12-hydroxydodecanoate + oxidized [NADPH--hemoprotein reductase] + H2O + H(+). It catalyses the reaction tetradecanoate + reduced [NADPH--hemoprotein reductase] + O2 = 14-hydroxytetradecanoate + oxidized [NADPH--hemoprotein reductase] + H2O + H(+). The catalysed reaction is hexadecanoate + reduced [NADPH--hemoprotein reductase] + O2 = 16-hydroxyhexadecanoate + oxidized [NADPH--hemoprotein reductase] + H2O + H(+). It carries out the reaction (5Z,8Z,11Z,14Z,17Z)-eicosapentaenoate + reduced [NADPH--hemoprotein reductase] + O2 = 20-hydroxy-(5Z,8Z,11Z,14Z,17Z)-eicosapentaenoate + oxidized [NADPH--hemoprotein reductase] + H2O + H(+). The enzyme catalyses (4Z,7Z,10Z,13Z,16Z,19Z)-docosahexaenoate + reduced [NADPH--hemoprotein reductase] + O2 = 22-hydroxy-(4Z,7Z,10Z,13Z,16Z,19Z)-docosahexaenoate + oxidized [NADPH--hemoprotein reductase] + H2O + H(+). It participates in lipid metabolism; fatty acid metabolism. Inhibited by N-hydroxy-N'-(4-n-butyl-2-methylphenyl formamidine)(HET0016) with an IC(50) of 38 nM. Functionally, a cytochrome P450 monooxygenase involved in fatty acid metabolism in the eye. Catalyzes the omega-hydroxylation of polyunsaturated fatty acids (PUFAs) docosahexaenoate (DHA) and its precursor eicosapentaenoate (EPA), and may contribute to the homeostasis of these retinal PUFAs. Omega hydroxylates saturated fatty acids such as laurate, myristate and palmitate, the catalytic efficiency decreasing in the following order: myristate &gt; laurate &gt; palmitate (C14&gt;C12&gt;C16). Mechanistically, uses molecular oxygen inserting one oxygen atom into a substrate, and reducing the second into a water molecule, with two electrons provided by NADPH via cytochrome P450 reductase (CPR; NADPH-ferrihemoprotein reductase). The sequence is that of Cytochrome P450 4V2 (CYP4V2) from Homo sapiens (Human).